Consider the following 705-residue polypeptide: Polyphosphate kinase (705 aa).

Position 58 (Asn-58) interacts with ATP. Positions 389 and 419 each coordinate Mg(2+). His-449 functions as the Phosphohistidine intermediate in the catalytic mechanism. 3 residues coordinate ATP: Tyr-482, Arg-578, and His-606.

Belongs to the polyphosphate kinase 1 (PPK1) family. The cofactor is Mg(2+). In terms of processing, an intermediate of this reaction is the autophosphorylated ppk in which a phosphate is covalently linked to a histidine residue through a N-P bond.

It carries out the reaction [phosphate](n) + ATP = [phosphate](n+1) + ADP. In terms of biological role, catalyzes the reversible transfer of the terminal phosphate of ATP to form a long-chain polyphosphate (polyP). The sequence is that of Polyphosphate kinase from Halalkalibacterium halodurans (strain ATCC BAA-125 / DSM 18197 / FERM 7344 / JCM 9153 / C-125) (Bacillus halodurans).